Consider the following 511-residue polypeptide: Cytochrome P450 monooxygenase cypX (511 aa).

Residues 18–38 traverse the membrane as a helical segment; it reads LPFSLALVAAAFVLYNIVSII. N162 and N407 each carry an N-linked (GlcNAc...) asparagine glycan. Residue C454 participates in heme binding.

This sequence belongs to the cytochrome P450 family. Requires heme as cofactor.

The protein resides in the membrane. The protein operates within mycotoxin biosynthesis. Its function is as follows. Cytochrome P450 monooxygenase; part of the fragmented gene cluster that mediates the biosynthesis of dothistromin (DOTH), a polyketide toxin very similar in structure to the aflatoxin precursor, versicolorin B. The first step of the pathway is the conversion of acetate to norsolorinic acid (NOR) and requires the fatty acid synthase subunits hexA and hexB, as well as the polyketide synthase pksA. PksA combines a hexanoyl starter unit and 7 malonyl-CoA extender units to synthesize the precursor NOR. The hexanoyl starter unit is provided to the acyl-carrier protein (ACP) domain by the fungal fatty acid synthase hexA/hexB. The second step is the conversion of NOR to averantin (AVN) and requires the norsolorinic acid ketoreductase nor1, which catalyzes the dehydration of norsolorinic acid to form (1'S)-averantin. The cytochrome P450 monooxygenase avnA then catalyzes the hydroxylation of AVN to 5'hydroxyaverantin (HAVN). The next step is performed by adhA that transforms HAVN to averufin (AVF). Averufin might then be converted to hydroxyversicolorone by cypX and avfA. Hydroxyversicolorone is further converted versiconal hemiacetal acetate (VHA) by moxY. VHA is then the substrate for the versiconal hemiacetal acetate esterase est1 to yield versiconal (VAL). Versicolorin B synthase vbsA then converts VAL to versicolorin B (VERB) by closing the bisfuran ring. Then, the activity of the versicolorin B desaturase verB leads to versicolorin A (VERA). DotB, a predicted chloroperoxidase, may perform epoxidation of the A-ring of VERA. Alternatively, a cytochrome P450, such as cypX or avnA could catalyze this step. It is also possible that another, uncharacterized, cytochrome P450 enzyme is responsible for this step. Opening of the epoxide could potentially be achieved by the epoxide hydrolase epoA. However, epoA seems not to be required for DOTH biosynthesis, but other epoxide hydrolases may have the ability to complement this hydrolysis. Alternatively, opening of the epoxide ring could be achieved non-enzymatically. The next step is the deoxygenation of ring A to yield the 5,8-dihydroxyanthraquinone which is most likely catalyzed by the NADPH dehydrogenase encoded by ver1. The last stages of DOTH biosynthesis are proposed to involve hydroxylation of the bisfuran. OrdB and norB might have oxidative roles here. An alternative possibility is that cytochrome P450 monoogenases such as avnA and cypX might perform these steps in addition to previously proposed steps. The polypeptide is Cytochrome P450 monooxygenase cypX (Dothistroma septosporum (Red band needle blight fungus)).